The following is a 258-amino-acid chain: Spectinomycin 9-adenylyltransferase (258 aa).

It catalyses the reaction spectinomycin + ATP = 9-O-adenylylspectinomycin + diphosphate. Mediates bacterial resistance to spectinomycin, is probably a spectinomycin 9-adenylyltransferase. The chain is Spectinomycin 9-adenylyltransferase from Campylobacter jejuni.